Consider the following 129-residue polypeptide: Gas vesicle protein C (129 aa).

Repeats lie at residues 19–51 (VTQLFRETHEFLSATTAHRQEQAKQQAQQLHQF), 52–84 (HQNLEQTTHEFLTETTTQRVAQAEAQANFLHKF), and 85–117 (HQNLEQTTQEFLAETAKNRTEQAKAQSQYLQQF). The 3 X 33 AA tandem repeats stretch occupies residues 19-117 (VTQLFRETHE…KAQSQYLQQF (99 aa)).

Belongs to the gas vesicle GvpC family.

The protein resides in the gas vesicle. Confers stability, involved in shaping gas vesicles, hollow, gas filled proteinaceous nanostructures. During planktonic growth they allow positioning of the organism at a favorable depth for light or nutrient acquisition. Its function is as follows. Cluster expression in E.coli (gvpA1-gvpA2-gvpC-gvpN-gvpJ-gvpK-gvpF-gvpG-gvpV-gvpW) allows cells to float and produces irregularly shaped gas vesicles. This is Gas vesicle protein C from Nostoc sp. (strain PCC 7120 / SAG 25.82 / UTEX 2576).